The sequence spans 1116 residues: MAP kinase kinase kinase mkh1 (1116 aa).

Disordered stretches follow at residues 510–601 (LKMP…SNSL) and 618–647 (ALDE…ENHH). The segment covering 515–531 (NSGSSAPQSPSSNTSAS) has biased composition (low complexity). Positions 553–569 (LRRKNTLTRRPSIRHAR) are enriched in basic residues. The span at 588 to 601 (SFDPKASSKSSNSL) shows a compositional bias: low complexity. The span at 634–647 (PKQSSSQVPKENHH) shows a compositional bias: polar residues. In terms of domain architecture, Protein kinase spans 825-1094 (WMKGELIGNG…AEELLNHPFM (270 aa)). Residues 831–839 (IGNGTYGKV) and Lys-854 each bind ATP. The active-site Proton acceptor is the Asp-955.

Belongs to the protein kinase superfamily. STE Ser/Thr protein kinase family. MAP kinase kinase kinase subfamily.

The enzyme catalyses L-seryl-[protein] + ATP = O-phospho-L-seryl-[protein] + ADP + H(+). The catalysed reaction is L-threonyl-[protein] + ATP = O-phospho-L-threonyl-[protein] + ADP + H(+). In terms of biological role, may regulate cell morphology, cell wall integrity, salt resistance, cell cycle reentry from stationary-phase arrest, and filamentous growth in response to stress. Activates the MAP kinase kinase skh1/pek1 by phosphorylation. In Schizosaccharomyces pombe (strain 972 / ATCC 24843) (Fission yeast), this protein is MAP kinase kinase kinase mkh1 (mkh1).